The following is a 171-amino-acid chain: S-ribosylhomocysteine lyase (171 aa).

Residues H54, H58, and C128 each contribute to the Fe cation site.

The protein belongs to the LuxS family. As to quaternary structure, homodimer. The cofactor is Fe cation.

The enzyme catalyses S-(5-deoxy-D-ribos-5-yl)-L-homocysteine = (S)-4,5-dihydroxypentane-2,3-dione + L-homocysteine. Functionally, involved in the synthesis of autoinducer 2 (AI-2) which is secreted by bacteria and is used to communicate both the cell density and the metabolic potential of the environment. The regulation of gene expression in response to changes in cell density is called quorum sensing. Catalyzes the transformation of S-ribosylhomocysteine (RHC) to homocysteine (HC) and 4,5-dihydroxy-2,3-pentadione (DPD). This Serratia proteamaculans (strain 568) protein is S-ribosylhomocysteine lyase.